We begin with the raw amino-acid sequence, 335 residues long: Glutamyl-tRNA reductase (335 aa).

Substrate is bound by residues 60 to 63 (TCHR), Ser110, 115 to 117 (ETE), and Gln121. The active-site Nucleophile is the Cys61. NADP(+) is bound at residue 189-194 (GYSEIN).

It belongs to the glutamyl-tRNA reductase family. In terms of assembly, homodimer.

It catalyses the reaction (S)-4-amino-5-oxopentanoate + tRNA(Glu) + NADP(+) = L-glutamyl-tRNA(Glu) + NADPH + H(+). The protein operates within porphyrin-containing compound metabolism; protoporphyrin-IX biosynthesis; 5-aminolevulinate from L-glutamyl-tRNA(Glu): step 1/2. Functionally, catalyzes the NADPH-dependent reduction of glutamyl-tRNA(Glu) to glutamate 1-semialdehyde (GSA). This is Glutamyl-tRNA reductase from Chlamydia trachomatis serovar D (strain ATCC VR-885 / DSM 19411 / UW-3/Cx).